Consider the following 195-residue polypeptide: Myelin-associated neurite-outgrowth inhibitor (195 aa).

At M1–K18 the chain is on the cytoplasmic side. A helical transmembrane segment spans residues G19–P43. The Extracellular segment spans residues G44–N143. A helical transmembrane segment spans residues G144–L163. Over T164–W195 the chain is Cytoplasmic.

The protein belongs to the FAM168 family.

The protein localises to the cytoplasm. It localises to the perinuclear region. It is found in the cell membrane. Its subcellular location is the cell projection. The protein resides in the axon. Inhibitor of neuronal axonal outgrowth. This is Myelin-associated neurite-outgrowth inhibitor (fam168b) from Danio rerio (Zebrafish).